We begin with the raw amino-acid sequence, 493 residues long: Neuronal acetylcholine receptor subunit alpha-6 (493 aa).

A signal peptide spans 1-30 (MLNGWGRGDLRSGLCLWICGFLAFFKGSRG). At 31-240 (CVSEEQLFHT…TYSFYIRRLP (210 aa)) the chain is on the extracellular side. Asn-54 and Asn-171 each carry an N-linked (GlcNAc...) asparagine glycan. 2 cysteine pairs are disulfide-bonded: Cys-158-Cys-172 and Cys-222-Cys-223. 3 helical membrane-spanning segments follow: residues 241–265 (MFYT…FYLP), 272–290 (VTLC…LVIT), and 306–327 (YLLF…VLNI). Residues 328–464 (HYRTPATHTM…WKYMAMVVDR (137 aa)) lie on the Cytoplasmic side of the membrane. The residue at position 401 (Ser-401) is a Phosphoserine. Residues 465 to 484 (VFLWVFIIVCVFGTVGLFLQ) form a helical membrane-spanning segment.

The protein belongs to the ligand-gated ion channel (TC 1.A.9) family. Acetylcholine receptor (TC 1.A.9.1) subfamily. Alpha-6/CHRNA6 sub-subfamily. In terms of assembly, neuronal AChR is composed of two different types of subunits: alpha and non-alpha (beta). CHRNA6/alpha-6 subunit can be combined to CHRNB2/beta-2 and CHRNA4/alpha-4 to give rise to functional receptors. Interacts with LYPD6. In terms of tissue distribution, predominantly expressed in only a few brain areas, including dopaminergic neurons, norepirephrine neurons and cells of the visual system.

It localises to the synaptic cell membrane. It catalyses the reaction Ca(2+)(in) = Ca(2+)(out). The enzyme catalyses K(+)(in) = K(+)(out). The catalysed reaction is Na(+)(in) = Na(+)(out). Activated by a myriad of ligands such as acetylcholine, cytisine and nicotine. CHRNA6 nAChR activity is inhibited by the antagonists alpha-conotoxin MII and PIA, a small disulfide-constrained peptides from cone snails. Functionally, component of neuronal acetylcholine receptors (nAChRs) that function as pentameric, ligand-gated cation channels with high calcium permeability among other activities. nAChRs are excitatory neurotrasnmitter receptors formed by a collection of nAChR subunits known to mediate synaptic transmission in the nervous system and the neuromuscular junction. Each nAchR subunit confers differential attributes to channel properties, including activation, deactivation and desensitization kinetics, pH sensitivity, cation permeability, and binding to allosteric modulators. CHRNA6 forms pentameric channels with CHRNB2 and CHRNA4 that exhibit high sensitivity to ACh and nicotine and are predominantly expressed in only a few brain areas, including dopaminergic neurons, norepirephrine neurons and cells of the visual system. nAChrs containing CHRNA6 subunits mediate endogenous cholinergic modulation of dopamine and gamma-aminobutyric acid (GABA) release in response to nicotine at nerve terminals. The polypeptide is Neuronal acetylcholine receptor subunit alpha-6 (Chrna6) (Rattus norvegicus (Rat)).